Consider the following 108-residue polypeptide: UPF0145 protein Acel_2109 (108 aa).

This sequence belongs to the UPF0145 family.

This Acidothermus cellulolyticus (strain ATCC 43068 / DSM 8971 / 11B) protein is UPF0145 protein Acel_2109.